Consider the following 307-residue polypeptide: Protoheme IX farnesyltransferase (307 aa).

9 helical membrane-spanning segments follow: residues 28 to 48, 50 to 70, 99 to 117, 121 to 138, 146 to 166, 173 to 193, 219 to 239, 241 to 261, and 278 to 298; these read LVIFTGICGLLAAPGAINPIL, FTAILCIAMGAGGSAALNQWW, FGILISVASVGIMGIAINW, IILAAAIVYYAVIYTIWL, IVIGGGAGAFPPMIGWVAVTG, VLLFAIIFMWTPPHFWALALF, ILVYSILLIPFAVAPWAIGAT, AIYGVSALLLTGAFAALSVPV, and LFGFSILYLFALFAALVADRY.

This sequence belongs to the UbiA prenyltransferase family. Protoheme IX farnesyltransferase subfamily.

The protein localises to the cell inner membrane. It carries out the reaction heme b + (2E,6E)-farnesyl diphosphate + H2O = Fe(II)-heme o + diphosphate. The protein operates within porphyrin-containing compound metabolism; heme O biosynthesis; heme O from protoheme: step 1/1. Functionally, converts heme B (protoheme IX) to heme O by substitution of the vinyl group on carbon 2 of heme B porphyrin ring with a hydroxyethyl farnesyl side group. This is Protoheme IX farnesyltransferase from Erythrobacter litoralis (strain HTCC2594).